The following is a 286-amino-acid chain: Phosphonates import ATP-binding protein PhnC (286 aa).

The ABC transporter domain occupies 3–246 (FHLKQVTRRF…AVTEIYGTDS (244 aa)). ATP is bound at residue 35 to 42 (GRSGAGKS).

This sequence belongs to the ABC transporter superfamily. Phosphonates importer (TC 3.A.1.9.1) family. In terms of assembly, the complex is composed of two ATP-binding proteins (PhnC), two transmembrane proteins (PhnE) and a solute-binding protein (PhnD).

The protein resides in the cell inner membrane. The catalysed reaction is phosphonate(out) + ATP + H2O = phosphonate(in) + ADP + phosphate + H(+). Its function is as follows. Part of the ABC transporter complex PhnCDE involved in phosphonates import. Responsible for energy coupling to the transport system. This chain is Phosphonates import ATP-binding protein PhnC, found in Agrobacterium fabrum (strain C58 / ATCC 33970) (Agrobacterium tumefaciens (strain C58)).